A 504-amino-acid polypeptide reads, in one-letter code: MEEFQGYLELDKSRQHDFLYPLIFQEYIYALAHDHGLNRSILLENVCYDNKSSSLIVKRLIXRMYQQNHLIISVNDSNQNPFLGHNKNLYSQMISEGFAVIVEIPFSLRSVSSLEGKEIXQSHNLXSIHSIFPFLEDKFLHLNYVSDILIPHPIHLEILVQTLRYWVKDASSLHLFLFFFYEYYXWNSLIXPXKSISXFSXXXXXXXXXXXXXXXXXXXXXXXFFRNQSSYLRSTSSGALLERIYFYGKIKHLVEVFVNDFQAILWLFKDPFMHYVRYQGKSILASKGTPLLMNKWKYYLVNFWQCHFYVWSQPGRIYINQLSNHSFDFLGYLSSVGLNPSVVRSQMLENSFIIDNAIKKFDIIVPIIPLIGSLAKAKFCNVLGHPISKPARADSSDSDIIDRFVRICRNLSHYHSGSSKKKSLYRIKYILRLSCARTLARKHKSTVRAFLKRLGSGLLEEFLTEEEQVLSLIFPKASSTSRRLYRGRIWYFDIISINDLANHE.

The protein belongs to the intron maturase 2 family. MatK subfamily.

It localises to the plastid. The protein localises to the chloroplast. Usually encoded in the trnK tRNA gene intron. Probably assists in splicing its own and other chloroplast group II introns. The sequence is that of Maturase K from Hamamelis mollis (Chinese witch hazel).